Reading from the N-terminus, the 227-residue chain is Large ribosomal subunit protein uL3 (227 aa).

A disordered region spans residues 144–166; the sequence is RRGPMAHGSKNHRLPGSTGPGTT.

This sequence belongs to the universal ribosomal protein uL3 family. As to quaternary structure, part of the 50S ribosomal subunit. Forms a cluster with proteins L14 and L19.

Functionally, one of the primary rRNA binding proteins, it binds directly near the 3'-end of the 23S rRNA, where it nucleates assembly of the 50S subunit. This is Large ribosomal subunit protein uL3 from Trichodesmium erythraeum (strain IMS101).